We begin with the raw amino-acid sequence, 157 residues long: Small ribosomal subunit protein uS7 (157 aa).

It belongs to the universal ribosomal protein uS7 family. In terms of assembly, part of the 30S ribosomal subunit. Contacts proteins S9 and S11.

Functionally, one of the primary rRNA binding proteins, it binds directly to 16S rRNA where it nucleates assembly of the head domain of the 30S subunit. Is located at the subunit interface close to the decoding center, probably blocks exit of the E-site tRNA. In Chlamydia felis (strain Fe/C-56) (Chlamydophila felis), this protein is Small ribosomal subunit protein uS7.